Consider the following 901-residue polypeptide: HTH-type transcriptional regulator MalT (901 aa).

39–46 (SPAGYGKT) is an ATP binding site. Residues 829-894 (ELIRTSPLTQ…DAVQHAQQLL (66 aa)) enclose the HTH luxR-type domain. The segment at residues 853–872 (NEQIAGELAVAATTIKTHIR) is a DNA-binding region (H-T-H motif).

This sequence belongs to the MalT family. As to quaternary structure, monomer in solution. Oligomerizes to an active state in the presence of the positive effectors ATP and maltotriose.

Its activity is regulated as follows. Activated by ATP and maltotriose, which are both required for DNA binding. Its function is as follows. Positively regulates the transcription of the maltose regulon whose gene products are responsible for uptake and catabolism of malto-oligosaccharides. Specifically binds to the promoter region of its target genes, recognizing a short DNA motif called the MalT box. This Salmonella choleraesuis (strain SC-B67) protein is HTH-type transcriptional regulator MalT.